A 456-amino-acid polypeptide reads, in one-letter code: Bifunctional protein GlmU (456 aa).

The segment at 1–229 (MSTSPLSVVI…LSEVEGVNNR (229 aa)) is pyrophosphorylase. Residues 11-14 (LAAG), Lys25, Gln76, 81-82 (GT), 103-105 (YGD), Gly140, Glu154, Asn169, and Asn227 contribute to the UDP-N-acetyl-alpha-D-glucosamine site. Asp105 provides a ligand contact to Mg(2+). Asn227 lines the Mg(2+) pocket. Positions 230 to 250 (LQLSALERAYQQQQAQRLLLA) are linker. Residues 251–456 (GVMLTDPARF…SGWERPVKKK (206 aa)) are N-acetyltransferase. UDP-N-acetyl-alpha-D-glucosamine contacts are provided by Arg333 and Lys351. The Proton acceptor role is filled by His363. UDP-N-acetyl-alpha-D-glucosamine is bound by residues Tyr366 and Asn377. Residues Ala380, 386 to 387 (NY), Ser405, Ala423, and Arg440 contribute to the acetyl-CoA site.

This sequence in the N-terminal section; belongs to the N-acetylglucosamine-1-phosphate uridyltransferase family. It in the C-terminal section; belongs to the transferase hexapeptide repeat family. As to quaternary structure, homotrimer. Mg(2+) serves as cofactor.

The protein resides in the cytoplasm. The enzyme catalyses alpha-D-glucosamine 1-phosphate + acetyl-CoA = N-acetyl-alpha-D-glucosamine 1-phosphate + CoA + H(+). It carries out the reaction N-acetyl-alpha-D-glucosamine 1-phosphate + UTP + H(+) = UDP-N-acetyl-alpha-D-glucosamine + diphosphate. It functions in the pathway nucleotide-sugar biosynthesis; UDP-N-acetyl-alpha-D-glucosamine biosynthesis; N-acetyl-alpha-D-glucosamine 1-phosphate from alpha-D-glucosamine 6-phosphate (route II): step 2/2. It participates in nucleotide-sugar biosynthesis; UDP-N-acetyl-alpha-D-glucosamine biosynthesis; UDP-N-acetyl-alpha-D-glucosamine from N-acetyl-alpha-D-glucosamine 1-phosphate: step 1/1. Its pathway is bacterial outer membrane biogenesis; LPS lipid A biosynthesis. In terms of biological role, catalyzes the last two sequential reactions in the de novo biosynthetic pathway for UDP-N-acetylglucosamine (UDP-GlcNAc). The C-terminal domain catalyzes the transfer of acetyl group from acetyl coenzyme A to glucosamine-1-phosphate (GlcN-1-P) to produce N-acetylglucosamine-1-phosphate (GlcNAc-1-P), which is converted into UDP-GlcNAc by the transfer of uridine 5-monophosphate (from uridine 5-triphosphate), a reaction catalyzed by the N-terminal domain. In Edwardsiella ictaluri (strain 93-146), this protein is Bifunctional protein GlmU.